Here is a 183-residue protein sequence, read N- to C-terminus: Inner membrane protein YgjV (183 aa).

The Periplasmic portion of the chain corresponds to 1–2 (MT). Residues 3–23 (AYWLAQGVGVIAFLIGITTFF) form a helical membrane-spanning segment. The Cytoplasmic portion of the chain corresponds to 24 to 38 (NRDERRFKKQLSVYS). A helical membrane pass occupies residues 39-59 (AVIGVHFFLLGTYPAGASAIL). Over 60–71 (NAIRTLITLRTR) the chain is Periplasmic. The next 2 membrane-spanning stretches (helical) occupy residues 72–92 (SLWVMAIFIVLTGGIGLAKFH) and 93–113 (HPVELLPVIGTIVSTWALFCC). Residues 114 to 133 (KGLTMRCVMWFSTCCWVIHN) lie on the Periplasmic side of the membrane. Residues 134 to 154 (FWAGSIGGTMIEGSFLLMNGL) form a helical membrane-spanning segment. Residues 155–183 (NIIRFWRMQKRGIDPFKVEKTPSAVDERG) lie on the Cytoplasmic side of the membrane.

Its subcellular location is the cell inner membrane. This is Inner membrane protein YgjV (ygjV) from Escherichia coli (strain K12).